Here is a 476-residue protein sequence, read N- to C-terminus: PRAME family member 6 (476 aa).

The LRR 1; degenerate repeat unit spans residues 97-124 (RWKLQVLDLQDVCENFWMVWSEAMARGC). The LRR 2; degenerate repeat unit spans residues 179–203 (HLCCKKLKILGMPFRNIRSILKMVN). An LRR 3; degenerate repeat occupies 204–230 (LDCIQEVEVNCKWVLPILTQFTPYLGH). Residues 231–266 (MRNLQKLVLSHMDVSRYVSPEQKKEIVTQFTTQFLK) form an LRR 4; degenerate repeat. LRR repeat units lie at residues 267-292 (LCCL…LSCL), 293-324 (KTSL…SQLK), 325-345 (TLDL…QILL), 349-376 (AATL…ALSR), and 377-401 (CFEL…LLSH).

Belongs to the PRAME family. In terms of assembly, component of a CRL2 E3 ubiquitin-protein ligase complex, also named ECS (Elongin BC-CUL2/5-SOCS-box protein) complex, composed of CUL2, Elongin BC (ELOB and ELOC), RBX1 and substrate-specific adapter PRAMEF6.

It functions in the pathway protein modification; protein ubiquitination. In terms of biological role, substrate-recognition component of a Cul2-RING (CRL2) E3 ubiquitin-protein ligase complex, which mediates ubiquitination of target proteins, leading to their degradation. The CRL2(PRAMEF6) complex mediates ubiquitination and degradation of truncated MSRB1/SEPX1 selenoproteins produced by failed UGA/Sec decoding. In Homo sapiens (Human), this protein is PRAME family member 6.